The primary structure comprises 294 residues: 4-hydroxy-tetrahydrodipicolinate synthase (294 aa).

Residue Thr-47 participates in pyruvate binding. Residue Tyr-135 is the Proton donor/acceptor of the active site. Lys-163 acts as the Schiff-base intermediate with substrate in catalysis. A pyruvate-binding site is contributed by Val-205.

Belongs to the DapA family. As to quaternary structure, homotetramer; dimer of dimers.

Its subcellular location is the cytoplasm. It carries out the reaction L-aspartate 4-semialdehyde + pyruvate = (2S,4S)-4-hydroxy-2,3,4,5-tetrahydrodipicolinate + H2O + H(+). It participates in amino-acid biosynthesis; L-lysine biosynthesis via DAP pathway; (S)-tetrahydrodipicolinate from L-aspartate: step 3/4. In terms of biological role, catalyzes the condensation of (S)-aspartate-beta-semialdehyde [(S)-ASA] and pyruvate to 4-hydroxy-tetrahydrodipicolinate (HTPA). This chain is 4-hydroxy-tetrahydrodipicolinate synthase, found in Rickettsia bellii (strain OSU 85-389).